Here is a 977-residue protein sequence, read N- to C-terminus: ATP-dependent RNA helicase DBP10 (977 aa).

The tract at residues methionine 1 to glycine 121 is disordered. Residues isoleucine 26 to alanine 35 show a composition bias toward polar residues. Acidic residues predominate over residues serine 37 to glutamate 61. The segment covering serine 70–proline 81 has biased composition (polar residues). Positions glycine 121–arginine 149 match the Q motif motif. The Helicase ATP-binding domain maps to isoleucine 152–valine 324. Alanine 165–threonine 172 is an ATP binding site. Residues aspartate 272 to aspartate 275 carry the DEAD box motif. Disordered stretches follow at residues asparagine 377–lysine 403 and lysine 871–phenylalanine 977. Residues glutamine 394–lysine 403 show a composition bias toward basic residues. In terms of domain architecture, Helicase C-terminal spans lysine 403 to methionine 554. Polar residues predominate over residues serine 878–glutamine 894. Positions arginine 910–serine 921 are enriched in basic and acidic residues. Residues lysine 961–phenylalanine 977 are compositionally biased toward basic residues.

The protein belongs to the DEAD box helicase family. DDX54/DBP10 subfamily.

It is found in the nucleus. Its subcellular location is the nucleolus. It carries out the reaction ATP + H2O = ADP + phosphate + H(+). Functionally, ATP-binding RNA helicase involved in the biogenesis of 60S ribosomal subunits and is required for the normal formation of 25S and 5.8S rRNAs. This is ATP-dependent RNA helicase DBP10 (DBP10) from Vanderwaltozyma polyspora (strain ATCC 22028 / DSM 70294 / BCRC 21397 / CBS 2163 / NBRC 10782 / NRRL Y-8283 / UCD 57-17) (Kluyveromyces polysporus).